Consider the following 390-residue polypeptide: Succinate--CoA ligase [ADP-forming] subunit beta (390 aa).

Residues 9–245 (KHLLKKYNIP…TTQEDEHETM (237 aa)) enclose the ATP-grasp domain. Residues Lys46, 53 to 55 (GRG), Glu99, Ser102, and Glu107 contribute to the ATP site. Residues Asn200 and Asp214 each contribute to the Mg(2+) site. Substrate contacts are provided by residues Asn265 and 322 to 324 (GIV).

This sequence belongs to the succinate/malate CoA ligase beta subunit family. As to quaternary structure, heterotetramer of two alpha and two beta subunits. It depends on Mg(2+) as a cofactor.

The enzyme catalyses succinate + ATP + CoA = succinyl-CoA + ADP + phosphate. It catalyses the reaction GTP + succinate + CoA = succinyl-CoA + GDP + phosphate. The protein operates within carbohydrate metabolism; tricarboxylic acid cycle; succinate from succinyl-CoA (ligase route): step 1/1. Its function is as follows. Succinyl-CoA synthetase functions in the citric acid cycle (TCA), coupling the hydrolysis of succinyl-CoA to the synthesis of either ATP or GTP and thus represents the only step of substrate-level phosphorylation in the TCA. The beta subunit provides nucleotide specificity of the enzyme and binds the substrate succinate, while the binding sites for coenzyme A and phosphate are found in the alpha subunit. The protein is Succinate--CoA ligase [ADP-forming] subunit beta of Coxiella burnetii (strain RSA 331 / Henzerling II).